A 169-amino-acid chain; its full sequence is NAD(P)H-quinone oxidoreductase subunit J, chloroplastic (169 aa).

The protein belongs to the complex I 30 kDa subunit family. NDH is composed of at least 16 different subunits, 5 of which are encoded in the nucleus.

It localises to the plastid. Its subcellular location is the chloroplast thylakoid membrane. The catalysed reaction is a plastoquinone + NADH + (n+1) H(+)(in) = a plastoquinol + NAD(+) + n H(+)(out). It carries out the reaction a plastoquinone + NADPH + (n+1) H(+)(in) = a plastoquinol + NADP(+) + n H(+)(out). NDH shuttles electrons from NAD(P)H:plastoquinone, via FMN and iron-sulfur (Fe-S) centers, to quinones in the photosynthetic chain and possibly in a chloroplast respiratory chain. The immediate electron acceptor for the enzyme in this species is believed to be plastoquinone. Couples the redox reaction to proton translocation, and thus conserves the redox energy in a proton gradient. This Anthoceros angustus (Hornwort) protein is NAD(P)H-quinone oxidoreductase subunit J, chloroplastic.